Consider the following 92-residue polypeptide: Cell division protein FtsB (92 aa).

At methionine 1 to leucine 3 the chain is on the cytoplasmic side. The chain crosses the membrane as a helical span at residues phenylalanine 4 to phenylalanine 21. Residues glycine 22 to aspartate 92 are Periplasmic-facing. A coiled-coil region spans residues aspartate 28–glutamate 62.

It belongs to the FtsB family. As to quaternary structure, part of a complex composed of FtsB, FtsL and FtsQ.

The protein localises to the cell inner membrane. In terms of biological role, essential cell division protein. May link together the upstream cell division proteins, which are predominantly cytoplasmic, with the downstream cell division proteins, which are predominantly periplasmic. In Psychromonas ingrahamii (strain DSM 17664 / CCUG 51855 / 37), this protein is Cell division protein FtsB.